Consider the following 328-residue polypeptide: Ferredoxin--NADP reductase 2 (328 aa).

Residues Glu37, Gln45, Tyr50, Val90, Phe124, Asp285, and Thr325 each coordinate FAD.

It belongs to the ferredoxin--NADP reductase type 2 family. Homodimer. The cofactor is FAD.

The catalysed reaction is 2 reduced [2Fe-2S]-[ferredoxin] + NADP(+) + H(+) = 2 oxidized [2Fe-2S]-[ferredoxin] + NADPH. The polypeptide is Ferredoxin--NADP reductase 2 (Latilactobacillus sakei subsp. sakei (strain 23K) (Lactobacillus sakei subsp. sakei)).